The sequence spans 591 residues: Probable Xaa-Pro aminopeptidase PEPP (591 aa).

The interval 31–59 (SIHSPPPSVSAATHGGVKNPSFSQRRTSG) is disordered. The Mn(2+) site is built by aspartate 322 and aspartate 333. Low complexity predominate over residues 441 to 450 (GLSRQAISGS). A disordered region spans residues 441–460 (GLSRQAISGSRRLPPPRNMK). Mn(2+)-binding residues include glutamate 511 and glutamate 552.

The protein belongs to the peptidase M24B family. The cofactor is Mn(2+).

It carries out the reaction Release of any N-terminal amino acid, including proline, that is linked to proline, even from a dipeptide or tripeptide.. Its function is as follows. Catalyzes the removal of a penultimate prolyl residue from the N-termini of peptides. In Sordaria macrospora (strain ATCC MYA-333 / DSM 997 / K(L3346) / K-hell), this protein is Probable Xaa-Pro aminopeptidase PEPP (PEPP).